Reading from the N-terminus, the 486-residue chain is Cobyric acid synthase (486 aa).

The GATase cobBQ-type domain occupies 248–439 (VLRIVVPALP…LHGLFDTPHA (192 aa)). Cys328 serves as the catalytic Nucleophile. Residue His431 is part of the active site.

Belongs to the CobB/CobQ family. CobQ subfamily.

The protein operates within cofactor biosynthesis; adenosylcobalamin biosynthesis. In terms of biological role, catalyzes amidations at positions B, D, E, and G on adenosylcobyrinic A,C-diamide. NH(2) groups are provided by glutamine, and one molecule of ATP is hydrogenolyzed for each amidation. The polypeptide is Cobyric acid synthase (Burkholderia mallei (strain ATCC 23344)).